Reading from the N-terminus, the 754-residue chain is NAD(P)H-quinone oxidoreductase subunit 5, chloroplastic (754 aa).

Helical transmembrane passes span 8–28 (FWII…GLLL), 40–60 (WVFP…YLAI), 89–109 (VDPL…LVLI), 125–145 (FAYM…SNLI), 147–167 (IYFF…FWFT), 185–205 (GDFG…SLEF), 219–239 (NEVN…GAIA), 258–278 (TPIS…FLGA), 280–300 (LLPL…LGII), 327–347 (LGYM…FHLI), 354–374 (ALLF…VGYS), 396–416 (TSFL…CFWS), 425–445 (WLYS…TAFY), 552–572 (FSML…IPFF), 608–628 (FITN…IASF), and 733–753 (LVYI…VLFF).

This sequence belongs to the complex I subunit 5 family. As to quaternary structure, NDH is composed of at least 16 different subunits, 5 of which are encoded in the nucleus.

The protein localises to the plastid. It is found in the chloroplast thylakoid membrane. The catalysed reaction is a plastoquinone + NADH + (n+1) H(+)(in) = a plastoquinol + NAD(+) + n H(+)(out). The enzyme catalyses a plastoquinone + NADPH + (n+1) H(+)(in) = a plastoquinol + NADP(+) + n H(+)(out). Its function is as follows. NDH shuttles electrons from NAD(P)H:plastoquinone, via FMN and iron-sulfur (Fe-S) centers, to quinones in the photosynthetic chain and possibly in a chloroplast respiratory chain. The immediate electron acceptor for the enzyme in this species is believed to be plastoquinone. Couples the redox reaction to proton translocation, and thus conserves the redox energy in a proton gradient. The protein is NAD(P)H-quinone oxidoreductase subunit 5, chloroplastic (ndhF) of Morus indica (Mulberry).